A 556-amino-acid chain; its full sequence is Potassium-transporting ATPase potassium-binding subunit (556 aa).

10 helical membrane passes run 6–26 (AGLI…VPLG), 65–85 (GVLA…LVQG), 133–153 (GLAV…VALV), 176–196 (LRIL…GGAI), 249–269 (PTAW…FSLP), 283–303 (YAIA…MLWF), 378–398 (GLYG…LMVG), 419–439 (YFLV…ALPG), 483–503 (ALGL…LALA), and 526–546 (FVGM…LPML).

The protein belongs to the KdpA family. As to quaternary structure, the system is composed of three essential subunits: KdpA, KdpB and KdpC.

The protein resides in the cell membrane. In terms of biological role, part of the high-affinity ATP-driven potassium transport (or Kdp) system, which catalyzes the hydrolysis of ATP coupled with the electrogenic transport of potassium into the cytoplasm. This subunit binds the extracellular potassium ions and delivers the ions to the membrane domain of KdpB through an intramembrane tunnel. The chain is Potassium-transporting ATPase potassium-binding subunit from Mycolicibacterium paratuberculosis (strain ATCC BAA-968 / K-10) (Mycobacterium paratuberculosis).